Here is a 234-residue protein sequence, read N- to C-terminus: Thiamine import ATP-binding protein ThiQ (234 aa).

Residues 2-230 form the ABC transporter domain; that stretch reads LRFSDVKYRY…EKPPELTQYL (229 aa). Position 32–39 (32–39) interacts with ATP; the sequence is GPSGAGKS.

It belongs to the ABC transporter superfamily. Thiamine importer (TC 3.A.1.19.1) family. As to quaternary structure, the complex is composed of two ATP-binding proteins (ThiQ), two transmembrane proteins (ThiP) and a solute-binding protein (ThiB).

The protein localises to the cell inner membrane. The enzyme catalyses thiamine(out) + ATP + H2O = thiamine(in) + ADP + phosphate + H(+). Functionally, part of the ABC transporter complex ThiBPQ involved in thiamine import. Responsible for energy coupling to the transport system. The protein is Thiamine import ATP-binding protein ThiQ of Aliivibrio fischeri (strain ATCC 700601 / ES114) (Vibrio fischeri).